We begin with the raw amino-acid sequence, 792 residues long: Serine/threonine-protein kinase Nek4 (792 aa).

Residues 6-261 form the Protein kinase domain; it reads YCYMRVVGRG…VRSILRQPYI (256 aa). Residues 12 to 20 and Lys-35 contribute to the ATP site; that span reads VGRGSYGEV. Asp-131 serves as the catalytic Proton acceptor. Thr-165 bears the Phosphothreonine; by autocatalysis mark. Disordered regions lie at residues 329–358, 379–515, 527–611, and 628–657; these read QEKP…NTGE, ANAG…LPSY, QQND…SITQ, and LSED…TNEM. 2 positions are modified to phosphoserine: Ser-340 and Ser-343. Composition is skewed to polar residues over residues 412-421, 456-467, 473-484, 496-505, and 541-551; these read QGNTKSSDQP, DQVTGIIENQDS, QPHSSMSEPSLS, AHSGTKSQFQ, and VNSSRTSSTAS. N6-methyllysine is present on Lys-566. The span at 602–611 shows a compositional bias: polar residues; sequence RFSSDCSITQ. Positions 641–657 are enriched in basic and acidic residues; sequence DKSDGDSREGKSHTNEM. The residue at position 675 (Ser-675) is a Phosphoserine.

The protein belongs to the protein kinase superfamily. NEK Ser/Thr protein kinase family. NIMA subfamily. The cofactor is Mn(2+). In terms of tissue distribution, expressed ubiquitously among various organs and is up-regulated in the testis.

The protein resides in the cytoplasm. It is found in the cell projection. The protein localises to the cilium. The catalysed reaction is L-seryl-[protein] + ATP = O-phospho-L-seryl-[protein] + ADP + H(+). The enzyme catalyses L-threonyl-[protein] + ATP = O-phospho-L-threonyl-[protein] + ADP + H(+). Its function is as follows. Required for normal entry into proliferative arrest after a limited number of cell divisions, also called replicative senescence. Required for normal cell cycle arrest in response to double-stranded DNA damage. Protein kinase that seems to act exclusively upon threonine residues. The protein is Serine/threonine-protein kinase Nek4 (Nek4) of Mus musculus (Mouse).